The chain runs to 481 residues: UDP-glycosyltransferase 72B3 (481 aa).

UDP-alpha-D-glucose-binding positions include Ser277, 347–349, 364–372, and 386–389; these read APQ, HCGWNSSLE, and YAEQ.

This sequence belongs to the UDP-glycosyltransferase family.

Possesses low quercetin 3-O-glucosyltransferase activity in vitro. The sequence is that of UDP-glycosyltransferase 72B3 (UGT72B3) from Arabidopsis thaliana (Mouse-ear cress).